The sequence spans 391 residues: 4-hydroxy-3-methylbut-2-en-1-yl diphosphate synthase (flavodoxin) (391 aa).

[4Fe-4S] cluster-binding residues include Cys281, Cys284, Cys316, and Glu323. A disordered region spans residues 372–391; that stretch reads EMGGEDGQGGIKGSPVVSVS.

The protein belongs to the IspG family. [4Fe-4S] cluster is required as a cofactor.

The catalysed reaction is (2E)-4-hydroxy-3-methylbut-2-enyl diphosphate + oxidized [flavodoxin] + H2O + 2 H(+) = 2-C-methyl-D-erythritol 2,4-cyclic diphosphate + reduced [flavodoxin]. Its pathway is isoprenoid biosynthesis; isopentenyl diphosphate biosynthesis via DXP pathway; isopentenyl diphosphate from 1-deoxy-D-xylulose 5-phosphate: step 5/6. Converts 2C-methyl-D-erythritol 2,4-cyclodiphosphate (ME-2,4cPP) into 1-hydroxy-2-methyl-2-(E)-butenyl 4-diphosphate. This is 4-hydroxy-3-methylbut-2-en-1-yl diphosphate synthase (flavodoxin) from Renibacterium salmoninarum (strain ATCC 33209 / DSM 20767 / JCM 11484 / NBRC 15589 / NCIMB 2235).